The sequence spans 581 residues: Suppressor of cytokine signaling 7 (581 aa).

4 disordered regions span residues 1-23 (MVFR…EPGP), 89-109 (PPPP…DPTE), 123-272 (EAES…RTQS), and 297-316 (QRGL…RRSL). Composition is skewed to pro residues over residues 89-99 (PPPPQPQPPAA), 154-164 (PPGPELPPVPF), and 187-198 (QPPPPPPPPGPL). The mediates interaction with SORBS3 stretch occupies residues 124 to 494 (AESLETNSCS…GKFLYFLRSR (371 aa)). A compositionally biased stretch (basic residues) spans 208 to 219 (GSFKIRLSRLFR). Residues 303 to 313 (PHPPTPPPPPR) are compositionally biased toward pro residues. In terms of domain architecture, SH2 spans 400-509 (WYWGPMNWED…PTPVQLLYPV (110 aa)). The 51-residue stretch at 504–554 (QLLYPVSRFSNVKSLQHLCRFRIRQLVRIDHIPDLPLPKPLISYIRKFYYY) folds into the SOCS box domain.

Substrate-recognition component of the ECS(SOCS7) complex, composed of SOCS7, CUL5, ELOB, ELOC and RNF7/RBX2. Interacts, via the third proline-rich region, with the second SH3 domain of the adapter protein NCK1. Also interacts with GRB2, INSR, PLCG1, SORBS3/vinexin, and phosphorylated STAT3 and STAT5. Interacts with SEPT6. Interacts with phosphorylated IRS4 and PIK3R1. As to expression, expressed in brain and leukocytes. Also in fetal lung fibroblasts and fetal brain.

Its subcellular location is the cytoplasm. It is found in the nucleus. The protein resides in the cell membrane. The protein operates within protein modification; protein ubiquitination. In terms of biological role, substrate-recognition component of a cullin-5-RING E3 ubiquitin-protein ligase complex (ECS complex, also named CRL5 complex), which mediates the ubiquitination and subsequent proteasomal degradation of target proteins, such as DAB1 and IRS1. Specifically recognizes and binds phosphorylated proteins via its SH2 domain, promoting their ubiquitination. The ECS(SOCS7) complex acts as a key regulator of reelin signaling by mediating ubiquitination and degradation of phosphorylated DAB1 in the cortical plate of the developing cerebral cortex, thereby regulating neuron positioning during cortex development. Functions in insulin signaling and glucose homeostasis through IRS1 ubiquitination and subsequent proteasomal degradation. Also inhibits prolactin, growth hormone and leptin signaling by preventing STAT3 and STAT5 activation, sequestering them in the cytoplasm and reducing their binding to DNA. The sequence is that of Suppressor of cytokine signaling 7 from Homo sapiens (Human).